Here is a 405-residue protein sequence, read N- to C-terminus: Deoxyguanosinetriphosphate triphosphohydrolase-like protein (405 aa).

The HD domain maps to 75 to 219 (RLTHTIEVAQ…AAVADDIAYN (145 aa)).

The protein belongs to the dGTPase family. Type 2 subfamily.

The chain is Deoxyguanosinetriphosphate triphosphohydrolase-like protein from Allorhizobium ampelinum (strain ATCC BAA-846 / DSM 112012 / S4) (Agrobacterium vitis (strain S4)).